We begin with the raw amino-acid sequence, 236 residues long: Zinc finger AN1 domain-containing stress-associated protein 13 (236 aa).

2 disordered regions span residues 48–81 (KEGRSGGGGGSEGQRTDSRLQLPTTSIVDSPGKR) and 150–173 (TVPEGIPVDEGAMPPPPPPRAKTK). Over residues 66 to 75 (RLQLPTTSIV) the composition is skewed to polar residues. The AN1-type; degenerate zinc finger occupies 170 to 216 (AKTKSRCAACGRRVGLMGFECRCGAVFCGAHPLLGQARLWLRLQGRA). 4 residues coordinate Zn(2+): C176, C179, C197, and H200.

Its function is as follows. May be involved in environmental stress response. The chain is Zinc finger AN1 domain-containing stress-associated protein 13 (SAP13) from Oryza sativa subsp. japonica (Rice).